The primary structure comprises 332 residues: Ferredoxin--NADP reductase (332 aa).

Residues threonine 20, glutamate 39, glutamine 47, tyrosine 52, valine 92, phenylalanine 126, aspartate 288, and threonine 329 each coordinate FAD.

The protein belongs to the ferredoxin--NADP reductase type 2 family. As to quaternary structure, homodimer. FAD serves as cofactor.

It catalyses the reaction 2 reduced [2Fe-2S]-[ferredoxin] + NADP(+) + H(+) = 2 oxidized [2Fe-2S]-[ferredoxin] + NADPH. The sequence is that of Ferredoxin--NADP reductase from Geobacillus kaustophilus (strain HTA426).